The following is a 623-amino-acid chain: MNQSFWRPLFAILLFMLVFHLTNIFFAQQGAQVAQISYSRLRAELAQDNIKKITLKGTAVTGEFRGKTRVSALVQGKEQQREFTGFSSVLPTIDDQTLVPELMARKVEVSALSTETPLLLNALIYVAPWVILIAIWWVGMRSMRSQGPSGMMGGFSRSGAKAYLAGDKMAVSFKDVAGMEDSKQELKEVVDYLRNPKQFARIGGKVPKGVLLVGPPGTGKTLLARAVAGEAGVAFFSISASQFIEMFVGVGASRVRDLFTNAKKAAPSIVFIDELDAVGRSRGAGFGGGHDEREQTLNQLLSEMDGFDQHEEVIVLAATNRPDVLDPALLRPGRFDRHVVIERPDWRDREKILQVHVRKITMNGRIDLGVIARGTPGMTGADLESLVNEAAILASRENAAAVTMEHLEKAKDKILMGSERRMIISLEEKRITAYHEAGHTLVARLLPGTDPIHKVTIIPHGMALGVTQQLPEDDRYHYPQSYLENRLVVAMGGRVAERLAFGEVSSGAQGDLKQVTSLAEKMVCQWGMSEKVGGMTFSRGEEHPFLGMKLAEEKTFSEAMAWRIDQEIAAFITRAEQRAGDLLSANRERLDLLAQALQDEETLDGSRVDEIIGSLNTAQAPPP.

Topologically, residues 1–7 are cytoplasmic; that stretch reads MNQSFWR. A helical membrane pass occupies residues 8–28; the sequence is PLFAILLFMLVFHLTNIFFAQ. Over 29–117 the chain is Periplasmic; it reads QGAQVAQISY…EVSALSTETP (89 aa). A helical transmembrane segment spans residues 118–138; it reads LLLNALIYVAPWVILIAIWWV. Residues 139-623 are Cytoplasmic-facing; the sequence is GMRSMRSQGP…SLNTAQAPPP (485 aa). Residue 214–221 coordinates ATP; sequence GPPGTGKT. H435 provides a ligand contact to Zn(2+). Residue E436 is part of the active site. Positions 439 and 511 each coordinate Zn(2+).

This sequence in the central section; belongs to the AAA ATPase family. The protein in the C-terminal section; belongs to the peptidase M41 family. In terms of assembly, homohexamer. Requires Zn(2+) as cofactor.

It localises to the cell inner membrane. Its function is as follows. Acts as a processive, ATP-dependent zinc metallopeptidase for both cytoplasmic and membrane proteins. Plays a role in the quality control of integral membrane proteins. This chain is ATP-dependent zinc metalloprotease FtsH, found in Pelobacter propionicus (strain DSM 2379 / NBRC 103807 / OttBd1).